Here is a 276-residue protein sequence, read N- to C-terminus: Halorhodopsin (276 aa).

The propeptide occupies 1–21; sequence MTAASTTATTMLQATQSDVLQ. Over 22-25 the chain is Extracellular; the sequence is EIQS. A helical transmembrane segment spans residues 26 to 51; the sequence is NFLLNSSIWVNIALAGVVILLFVAMG. At 52 to 57 the chain is on the cytoplasmic side; sequence RDIESP. Residues 58–81 traverse the membrane as a helical segment; sequence RAKLIWVATMLVPLVSISSYAGLA. The Extracellular portion of the chain corresponds to 82–105; the sequence is SGLTVGFLQMPPGHALAGQEVLSP. The chain crosses the membrane as a helical span at residues 106–127; that stretch reads WGRYLTWTFSTPMILLALGLLA. Topologically, residues 128-130 are cytoplasmic; that stretch reads DTD. The chain crosses the membrane as a helical span at residues 131 to 154; sequence IASLFTAITMDIGMCVTGLAAALI. The Extracellular portion of the chain corresponds to 155–157; the sequence is TSS. A helical membrane pass occupies residues 158 to 180; it reads HLLRWVFYGISCAFFVAVLYVLL. The Cytoplasmic segment spans residues 181 to 192; that stretch reads VQWPADAEAAGT. The chain crosses the membrane as a helical span at residues 193-216; the sequence is SEIFGTLKILTVVLWLGYPILWAL. The Extracellular segment spans residues 217–225; that stretch reads GSEGVALLS. The helical transmembrane segment at 226 to 254 threads the bilayer; sequence VGVTSWGYSGLDILAKYVFAFLLLRWVAA. Residue Lys-241 is modified to N6-(retinylidene)lysine. Over 255–276 the chain is Cytoplasmic; sequence NEGAVSGSGMSIGSGGAAPADD.

This sequence belongs to the archaeal/bacterial/fungal opsin family.

The protein localises to the cell membrane. In terms of biological role, light-driven chloride pump. In Halobacterium halobium (strain port), this protein is Halorhodopsin (hop).